The following is a 167-amino-acid chain: Alanine- and arginine-rich domain-containing protein (167 aa).

The disordered stretch occupies residues 140 to 167 (LKKRQDQELASKPQSPQDKEMNSECGSA).

In terms of tissue distribution, preferentially expressed in testis both in embryo and adult. Expressed at much lower level in other tissues.

The sequence is that of Alanine- and arginine-rich domain-containing protein (Aard) from Mus musculus (Mouse).